Reading from the N-terminus, the 244-residue chain is S-adenosyl-L-methionine-dependent Diels-Alderase iliD (244 aa).

It belongs to the class I-like SAM-binding methyltransferase superfamily. Erg6/SMT family. It depends on S-adenosyl-L-methionine as a cofactor.

It carries out the reaction 3-[(2E,4E,8S,10E,12Z)-4,8-dimethyltetradeca-2,4,10,12-tetraenoyl]-4-hydroxy-5-(4-hydroxyphenyl)-1,2-dihydropyridin-2-one = ilicicolin H. It participates in mycotoxin biosynthesis. S-adenosyl-l-methionine-dependent Diels-Alderase; part of the gene cluster that mediates the biosynthesis of ilicicolin H, a 4-hydroxy-2-pyridonealkaloid that has potent and broad antifungal activities by inhibiting the mitochondrial respiration chain. IliD catalyzes the Diels-Alder reaction that converts the acyclic 2-pyridone intermediate to 8-epi-ilicicolin H. The biosynthesis of ilicicolin H starts with formation of the tetramic acid by the hybrid PKS-NRPS synthetase iliA with the partnering trans-enoyl reductase iliB since iliA lacks a designated enoylreductase (ER) domain. The cytochrome P450 monooxygenase iliC then catalyzes the ring expansion of the tetramate to the acyclic 2-pyridone. The pericyclase iliD further converts the acyclic 2-pyridone into 8-epi-ilicicolin H. 8-epi-ilicicolin H might then spontaneously convert to ilicicolin H since ilicicolin H is produced in the absence of the epimerase iliE, in contrast to what was observed for the Talaromyces variabilis ilicolin H biosynthetic pathway. This Neonectria sp. (strain DH2) protein is S-adenosyl-L-methionine-dependent Diels-Alderase iliD.